The sequence spans 366 residues: UPF0324 membrane protein RSc1111 (366 aa).

8 helical membrane-spanning segments follow: residues 21–43, 103–125, 137–159, 169–191, 198–220, 240–262, 283–305, and 343–365; these read LAGA…TAWA, LGAS…GAWV, AVLV…APAV, AIAS…YALA, VAPA…VIAA, VLAL…LVLE, WFAA…ATWH, and AGVL…RWLA.

The protein belongs to the UPF0324 family.

It localises to the cell membrane. The sequence is that of UPF0324 membrane protein RSc1111 from Ralstonia nicotianae (strain ATCC BAA-1114 / GMI1000) (Ralstonia solanacearum).